We begin with the raw amino-acid sequence, 120 residues long: Ribonuclease P protein component (120 aa).

Belongs to the RnpA family. As to quaternary structure, consists of a catalytic RNA component (M1 or rnpB) and a protein subunit.

It carries out the reaction Endonucleolytic cleavage of RNA, removing 5'-extranucleotides from tRNA precursor.. In terms of biological role, RNaseP catalyzes the removal of the 5'-leader sequence from pre-tRNA to produce the mature 5'-terminus. It can also cleave other RNA substrates such as 4.5S RNA. The protein component plays an auxiliary but essential role in vivo by binding to the 5'-leader sequence and broadening the substrate specificity of the ribozyme. This is Ribonuclease P protein component from Thioalkalivibrio sulfidiphilus (strain HL-EbGR7).